The chain runs to 512 residues: Activin receptor type-2B (512 aa).

Residues 1 to 24 (MSASWLTLAVLCATLGAGPGHGEA) form the signal peptide. Residues 25-137 (ETRECIYYNA…PPPPTPSLLN (113 aa)) lie on the Extracellular side of the membrane. 5 disulfide bridges follow: C29/C59, C49/C77, C84/C103, C90/C102, and C104/C109. N42 and N65 each carry an N-linked (GlcNAc...) asparagine glycan. A helical transmembrane segment spans residues 138–158 (ILVYSLLPIAVLSVAILLAFW). Over 159-512 (MYRHRKPPYG…VDLPPKESSI (354 aa)) the chain is Cytoplasmic. The region spanning 190 to 478 (LQLLEIKARG…LSAGCVEERI (289 aa)) is the Protein kinase domain. ATP is bound by residues 196–204 (KARGRFGCV) and K217. Catalysis depends on D321, which acts as the Proton acceptor.

Belongs to the protein kinase superfamily. TKL Ser/Thr protein kinase family. TGFB receptor subfamily. Mg(2+) serves as cofactor. The cofactor is Mn(2+). As to expression, not expressed in hen anterior pituitary during the ovulatory cycle but expressed in the ovarian follicle.

The protein localises to the membrane. The enzyme catalyses L-threonyl-[receptor-protein] + ATP = O-phospho-L-threonyl-[receptor-protein] + ADP + H(+). It catalyses the reaction L-seryl-[receptor-protein] + ATP = O-phospho-L-seryl-[receptor-protein] + ADP + H(+). In terms of biological role, on ligand binding, forms a receptor complex consisting of two type II and two type I transmembrane serine/threonine kinases. Type II receptors phosphorylate and activate type I receptors which autophosphorylate, then bind and activate SMAD transcriptional regulators. Receptor for activin A, activin B and inhibin A. May modulate neuropeptide expression in dorsal root ganglia (DRG) neurons and ovarian follicle development. The chain is Activin receptor type-2B (ACVR2B) from Gallus gallus (Chicken).